Consider the following 366-residue polypeptide: DNA integrity scanning protein DisA (366 aa).

Residues 21–159 (VHTLKGTLQR…EGKSHMLEQP (139 aa)) enclose the DAC domain. ATP-binding positions include G88, L106, and 119–123 (TRHRS).

Belongs to the DisA family. As to quaternary structure, homooctamer. The cofactor is Mg(2+).

The enzyme catalyses 2 ATP = 3',3'-c-di-AMP + 2 diphosphate. Functionally, participates in a DNA-damage check-point. DisA forms globular foci that rapidly scan along the chromosomes searching for lesions. Also has diadenylate cyclase activity, catalyzing the condensation of 2 ATP molecules into cyclic di-AMP (c-di-AMP). c-di-AMP likely acts as a signaling molecule that may couple DNA integrity with a cellular process. This is DNA integrity scanning protein DisA from Corynebacterium glutamicum (strain ATCC 13032 / DSM 20300 / JCM 1318 / BCRC 11384 / CCUG 27702 / LMG 3730 / NBRC 12168 / NCIMB 10025 / NRRL B-2784 / 534).